Reading from the N-terminus, the 245-residue chain is MWERRGRGESAAGTAAVASRNASGLRPPPAILPTSMCQPPGIMQFEESQLGAQAPRATQPPDLRPMETFLTGEPKALGTVQILIGLIHLGFGSVLLMVRRGHLGMLFIEGGVPFWGGACFIISGSLSVAAERNHTSCLLKSSLGTNILSAMAAFAGTAILLMDFGVTNWDVGRGYLAVLTIFTILEFFIAVIATHFGCQATRAQTNASVIFLPNAFGTDFNIPSPAVSPPPAYDNVAYMPKESSE.

A disordered region spans residues 1–30 (MWERRGRGESAAGTAAVASRNASGLRPPPA). 4 helical membrane-spanning segments follow: residues 78-98 (GTVQILIGLIHLGFGSVLLMV), 103-123 (LGMLFIEGGVPFWGGACFIIS), 147-167 (ILSAMAAFAGTAILLMDFGVT), and 176-196 (LAVLTIFTILEFFIAVIATHF).

This sequence belongs to the MS4A family.

The protein resides in the membrane. Its function is as follows. May be involved in signal transduction as a component of a multimeric receptor complex. The protein is Membrane-spanning 4-domains subfamily A member 15 (Ms4a15) of Mus musculus (Mouse).